Consider the following 416-residue polypeptide: Serine hydroxymethyltransferase (416 aa).

Residues L118 and 122–124 (GHL) contribute to the (6S)-5,6,7,8-tetrahydrofolate site. N6-(pyridoxal phosphate)lysine is present on K226. (6S)-5,6,7,8-tetrahydrofolate-binding positions include E242 and 350-352 (SPF).

Belongs to the SHMT family. As to quaternary structure, homodimer. Requires pyridoxal 5'-phosphate as cofactor.

The protein localises to the cytoplasm. The enzyme catalyses (6R)-5,10-methylene-5,6,7,8-tetrahydrofolate + glycine + H2O = (6S)-5,6,7,8-tetrahydrofolate + L-serine. It functions in the pathway one-carbon metabolism; tetrahydrofolate interconversion. Its pathway is amino-acid biosynthesis; glycine biosynthesis; glycine from L-serine: step 1/1. Catalyzes the reversible interconversion of serine and glycine with tetrahydrofolate (THF) serving as the one-carbon carrier. This reaction serves as the major source of one-carbon groups required for the biosynthesis of purines, thymidylate, methionine, and other important biomolecules. Also exhibits THF-independent aldolase activity toward beta-hydroxyamino acids, producing glycine and aldehydes, via a retro-aldol mechanism. The chain is Serine hydroxymethyltransferase from Helicobacter hepaticus (strain ATCC 51449 / 3B1).